We begin with the raw amino-acid sequence, 979 residues long: Translation initiation factor IF-2 (979 aa).

Positions 33–391 (VKSHSSTITT…TPPAEITLTE (359 aa)) are disordered. Composition is skewed to low complexity over residues 54-63 (QKRPQAPKAQ) and 139-150 (AKTTSPKAEPAA). Positions 151 to 166 (PAAPKPKLMGPPPRPT) are enriched in pro residues. Residues 234–252 (PELDEEPDTNNVEGDDDAT) show a composition bias toward acidic residues. Composition is skewed to basic residues over residues 263–278 (PAAK…PSKR) and 294–303 (TKTSKLKRRP). Over residues 314–328 (GTTTNNNAEVPSVSL) the composition is skewed to polar residues. The segment covering 371 to 380 (KEQRRDRPDV) has biased composition (basic and acidic residues). Residues 468-641 (HRPPVVTIMG…LLVSEIEELS (174 aa)) form the tr-type G domain. The G1 stretch occupies residues 477–484 (GHVDHGKT). 477–484 (GHVDHGKT) lines the GTP pocket. A G2 region spans residues 502–506 (GITQH). Residues 527–530 (DTPG) form a G3 region. GTP is bound by residues 527–531 (DTPGH) and 581–584 (NKMD). Residues 581–584 (NKMD) are G4. The G5 stretch occupies residues 617 to 619 (SAL).

It belongs to the TRAFAC class translation factor GTPase superfamily. Classic translation factor GTPase family. IF-2 subfamily.

Its subcellular location is the cytoplasm. Functionally, one of the essential components for the initiation of protein synthesis. Protects formylmethionyl-tRNA from spontaneous hydrolysis and promotes its binding to the 30S ribosomal subunits. Also involved in the hydrolysis of GTP during the formation of the 70S ribosomal complex. This chain is Translation initiation factor IF-2, found in Picosynechococcus sp. (strain ATCC 27264 / PCC 7002 / PR-6) (Agmenellum quadruplicatum).